Here is a 123-residue protein sequence, read N- to C-terminus: Pre-B lymphocyte protein 3 (123 aa).

An N-terminal signal peptide occupies residues 1–20 (MACRCLSFLLMGTFLSVSQT). The Ig-like domain occupies 21–123 (VLAQLDALLV…YCSVGYGFSP (103 aa)). Residues cysteine 40 and cysteine 115 are joined by a disulfide bond.

Belongs to the immunoglobulin superfamily. Expressed in B-cell precursors. Expressed in fetal liver, bone marrow, spleen and lymph node.

Its function is as follows. Associates with the Ig-mu chain to form a molecular complex that is expressed on the surface of pre-B-cells. The polypeptide is Pre-B lymphocyte protein 3 (VPREB3) (Homo sapiens (Human)).